The sequence spans 712 residues: Ribosomal RNA large subunit methyltransferase K/L (712 aa).

The 112-residue stretch at 46 to 157 (GAYQALLHSR…RENMVVSLDL (112 aa)) folds into the THUMP domain.

Belongs to the methyltransferase superfamily. RlmKL family.

The protein localises to the cytoplasm. It catalyses the reaction guanosine(2445) in 23S rRNA + S-adenosyl-L-methionine = N(2)-methylguanosine(2445) in 23S rRNA + S-adenosyl-L-homocysteine + H(+). It carries out the reaction guanosine(2069) in 23S rRNA + S-adenosyl-L-methionine = N(2)-methylguanosine(2069) in 23S rRNA + S-adenosyl-L-homocysteine + H(+). In terms of biological role, specifically methylates the guanine in position 2445 (m2G2445) and the guanine in position 2069 (m7G2069) of 23S rRNA. The sequence is that of Ribosomal RNA large subunit methyltransferase K/L from Actinobacillus pleuropneumoniae serotype 3 (strain JL03).